Here is a 364-residue protein sequence, read N- to C-terminus: Aminomethyltransferase (364 aa).

This sequence belongs to the GcvT family. In terms of assembly, the glycine cleavage system is composed of four proteins: P, T, L and H.

The catalysed reaction is N(6)-[(R)-S(8)-aminomethyldihydrolipoyl]-L-lysyl-[protein] + (6S)-5,6,7,8-tetrahydrofolate = N(6)-[(R)-dihydrolipoyl]-L-lysyl-[protein] + (6R)-5,10-methylene-5,6,7,8-tetrahydrofolate + NH4(+). Its function is as follows. The glycine cleavage system catalyzes the degradation of glycine. The protein is Aminomethyltransferase of Shewanella sediminis (strain HAW-EB3).